The following is a 189-amino-acid chain: Elongation factor P (189 aa).

It belongs to the elongation factor P family.

It is found in the cytoplasm. The protein operates within protein biosynthesis; polypeptide chain elongation. Its function is as follows. Involved in peptide bond synthesis. Stimulates efficient translation and peptide-bond synthesis on native or reconstituted 70S ribosomes in vitro. Probably functions indirectly by altering the affinity of the ribosome for aminoacyl-tRNA, thus increasing their reactivity as acceptors for peptidyl transferase. This is Elongation factor P from Rhizobium meliloti (strain 1021) (Ensifer meliloti).